Here is a 208-residue protein sequence, read N- to C-terminus: Redox-sensing transcriptional repressor Rex 1 (208 aa).

The segment at residues 15 to 54 is a DNA-binding region (H-T-H motif); that stretch reads SYYMCLERLLDEGVEVVSSEELARRLDLKASQIRKDLSYF. 89-94 is a binding site for NAD(+); the sequence is GAGNIG.

This sequence belongs to the transcriptional regulatory Rex family. In terms of assembly, homodimer.

Its subcellular location is the cytoplasm. Modulates transcription in response to changes in cellular NADH/NAD(+) redox state. This Thermotoga maritima (strain ATCC 43589 / DSM 3109 / JCM 10099 / NBRC 100826 / MSB8) protein is Redox-sensing transcriptional repressor Rex 1.